Consider the following 109-residue polypeptide: uncharacterized protein (109 aa).

The first 21 residues, 1 to 21, serve as a signal peptide directing secretion; sequence MEKSICTSVLVLGLFISSAIG.

In terms of tissue distribution, prismatic layer of shell (at protein level). Expressed primarily in the mantle with highest level in the mantle edge and lower level in the mantle pallium.

Its subcellular location is the secreted. This is an uncharacterized protein from Margaritifera margaritifera (Freshwater pearl mussel).